Reading from the N-terminus, the 164-residue chain is ATP synthase subunit b (164 aa).

Residues 7–25 (SFWLAVSFIIFVYLIYRPA) form a helical membrane-spanning segment.

The protein belongs to the ATPase B chain family. In terms of assembly, F-type ATPases have 2 components, F(1) - the catalytic core - and F(0) - the membrane proton channel. F(1) has five subunits: alpha(3), beta(3), gamma(1), delta(1), epsilon(1). F(0) has three main subunits: a(1), b(2) and c(10-14). The alpha and beta chains form an alternating ring which encloses part of the gamma chain. F(1) is attached to F(0) by a central stalk formed by the gamma and epsilon chains, while a peripheral stalk is formed by the delta and b chains.

The protein resides in the cell inner membrane. Functionally, f(1)F(0) ATP synthase produces ATP from ADP in the presence of a proton or sodium gradient. F-type ATPases consist of two structural domains, F(1) containing the extramembraneous catalytic core and F(0) containing the membrane proton channel, linked together by a central stalk and a peripheral stalk. During catalysis, ATP synthesis in the catalytic domain of F(1) is coupled via a rotary mechanism of the central stalk subunits to proton translocation. In terms of biological role, component of the F(0) channel, it forms part of the peripheral stalk, linking F(1) to F(0). This is ATP synthase subunit b from Rickettsia felis (strain ATCC VR-1525 / URRWXCal2) (Rickettsia azadi).